A 468-amino-acid chain; its full sequence is Proline--tRNA ligase (468 aa).

It belongs to the class-II aminoacyl-tRNA synthetase family. ProS type 3 subfamily. In terms of assembly, homodimer.

It localises to the cytoplasm. It catalyses the reaction tRNA(Pro) + L-proline + ATP = L-prolyl-tRNA(Pro) + AMP + diphosphate. Its function is as follows. Catalyzes the attachment of proline to tRNA(Pro) in a two-step reaction: proline is first activated by ATP to form Pro-AMP and then transferred to the acceptor end of tRNA(Pro). This is Proline--tRNA ligase from Frankia alni (strain DSM 45986 / CECT 9034 / ACN14a).